The chain runs to 154 residues: CASP-like protein 5B2 (154 aa).

At 1–10 the chain is on the cytoplasmic side; sequence MKKLLGGPGT. The chain crosses the membrane as a helical span at residues 11 to 31; that stretch reads VCGLLLRIGQCASAAASIGVM. At 32 to 42 the chain is on the extracellular side; that stretch reads VSAKEFSVHTA. Residues 43–63 form a helical membrane-spanning segment; it reads FCYLIASMGLQLLWSFGLACL. Residues 64 to 77 are Cytoplasmic-facing; it reads DVYALRGKKDLQNP. Residues 78–98 form a helical membrane-spanning segment; the sequence is ILVSLFVVGDWVTAMLSLAAA. Over 99–129 the chain is Extracellular; the sequence is CSSAGVVVLYEKDIKYCNTQSQYPCLRYEVA. A helical membrane pass occupies residues 130 to 150; it reads VALSFVTWIQIAVSSHVTFWI. At 151–154 the chain is on the cytoplasmic side; that stretch reads LASV.

This sequence belongs to the Casparian strip membrane proteins (CASP) family. Homodimer and heterodimers. Expressed in the stele of the root.

Its subcellular location is the cell membrane. In Arabidopsis thaliana (Mouse-ear cress), this protein is CASP-like protein 5B2.